A 635-amino-acid polypeptide reads, in one-letter code: 1-deoxy-D-xylulose-5-phosphate synthase (635 aa).

Thiamine diphosphate-binding positions include H74 and 115-117; that span reads AHS. D146 serves as a coordination point for Mg(2+). Thiamine diphosphate-binding positions include 147 to 148, N176, Y283, and E365; that span reads GA. N176 provides a ligand contact to Mg(2+).

This sequence belongs to the transketolase family. DXPS subfamily. Homodimer. The cofactor is Mg(2+). Requires thiamine diphosphate as cofactor.

The catalysed reaction is D-glyceraldehyde 3-phosphate + pyruvate + H(+) = 1-deoxy-D-xylulose 5-phosphate + CO2. It participates in metabolic intermediate biosynthesis; 1-deoxy-D-xylulose 5-phosphate biosynthesis; 1-deoxy-D-xylulose 5-phosphate from D-glyceraldehyde 3-phosphate and pyruvate: step 1/1. Catalyzes the acyloin condensation reaction between C atoms 2 and 3 of pyruvate and glyceraldehyde 3-phosphate to yield 1-deoxy-D-xylulose-5-phosphate (DXP). The protein is 1-deoxy-D-xylulose-5-phosphate synthase of Polaromonas sp. (strain JS666 / ATCC BAA-500).